A 701-amino-acid polypeptide reads, in one-letter code: Elongation factor G (701 aa).

The tr-type G domain occupies Ser-8–Thr-290. Residues Ala-17–Thr-24, Asp-88–His-92, and Asn-142–Asp-145 contribute to the GTP site.

This sequence belongs to the TRAFAC class translation factor GTPase superfamily. Classic translation factor GTPase family. EF-G/EF-2 subfamily.

It localises to the cytoplasm. Functionally, catalyzes the GTP-dependent ribosomal translocation step during translation elongation. During this step, the ribosome changes from the pre-translocational (PRE) to the post-translocational (POST) state as the newly formed A-site-bound peptidyl-tRNA and P-site-bound deacylated tRNA move to the P and E sites, respectively. Catalyzes the coordinated movement of the two tRNA molecules, the mRNA and conformational changes in the ribosome. This Neisseria meningitidis serogroup B (strain ATCC BAA-335 / MC58) protein is Elongation factor G.